Here is a 447-residue protein sequence, read N- to C-terminus: Phosphoglucosamine mutase (447 aa).

Serine 103 functions as the Phosphoserine intermediate in the catalytic mechanism. Mg(2+) contacts are provided by serine 103, aspartate 242, aspartate 244, and aspartate 246. Phosphoserine is present on serine 103.

It belongs to the phosphohexose mutase family. Mg(2+) is required as a cofactor. Activated by phosphorylation.

The enzyme catalyses alpha-D-glucosamine 1-phosphate = D-glucosamine 6-phosphate. In terms of biological role, catalyzes the conversion of glucosamine-6-phosphate to glucosamine-1-phosphate. The sequence is that of Phosphoglucosamine mutase from Paracoccus denitrificans (strain Pd 1222).